The chain runs to 154 residues: Transcriptional repressor NrdR (154 aa).

The segment at 3–34 is a zinc-finger region; the sequence is CPFCSAHDTKVIDSRLVAEGDQVRRRRECQAC. Positions 49–139 constitute an ATP-cone domain; the sequence is PRVIKQDGSR…VYRRFQDLNE (91 aa).

Belongs to the NrdR family. Zn(2+) serves as cofactor.

Its function is as follows. Negatively regulates transcription of bacterial ribonucleotide reductase nrd genes and operons by binding to NrdR-boxes. This is Transcriptional repressor NrdR from Azotobacter vinelandii (strain DJ / ATCC BAA-1303).